The primary structure comprises 305 residues: Mitochondrial citrate transporter D (305 aa).

Solcar repeat units lie at residues 10–101, 111–197, and 211–298; these read LPFG…WGAF, QTQS…VRAQ, and RNDL…VMDF. 6 helical membrane-spanning segments follow: residues 16-36, 78-98, 118-137, 176-196, 208-228, and 270-291; these read FIAG…LDVV, SAPI…NDSW, LTGA…FELV, TLWR…QVRA, QQTR…TILN, and LYKG…LLVV.

This sequence belongs to the mitochondrial carrier (TC 2.A.29) family.

The protein localises to the mitochondrion inner membrane. The catalysed reaction is citrate(in) + H(+)(in) = citrate(out) + H(+)(out). Its function is as follows. Mitochondrial transporter that mediates citrate export from mitochondria to cytoplasm. Both ctpA, ctpB, and ctpD play important roles in citric acid transport across the mitochondrial membrane and function in a redundant manner. The protein is Mitochondrial citrate transporter D of Aspergillus niger (strain ATCC 1015 / CBS 113.46 / FGSC A1144 / LSHB Ac4 / NCTC 3858a / NRRL 328 / USDA 3528.7).